Reading from the N-terminus, the 512-residue chain is 2,3-bisphosphoglycerate-independent phosphoglycerate mutase (512 aa).

Mn(2+) is bound by residues Asp-11 and Ser-61. The Phosphoserine intermediate role is filled by Ser-61. Residues His-122, 152 to 153 (RD), Arg-184, Arg-190, 259 to 262 (RADR), and Lys-332 contribute to the substrate site. Asp-399, His-403, Asp-440, His-441, and His-459 together coordinate Mn(2+).

This sequence belongs to the BPG-independent phosphoglycerate mutase family. In terms of assembly, monomer. Mn(2+) serves as cofactor.

It carries out the reaction (2R)-2-phosphoglycerate = (2R)-3-phosphoglycerate. It functions in the pathway carbohydrate degradation; glycolysis; pyruvate from D-glyceraldehyde 3-phosphate: step 3/5. Its function is as follows. Catalyzes the interconversion of 2-phosphoglycerate and 3-phosphoglycerate. The sequence is that of 2,3-bisphosphoglycerate-independent phosphoglycerate mutase from Francisella tularensis subsp. tularensis (strain FSC 198).